We begin with the raw amino-acid sequence, 420 residues long: MKSYFMQPLRGTKDILPNEINYWHHIHDKALTILSLHNYSEIRTPIIESTSLFKRSIGETSDIINKEMYTFTDQGDRSITLRPEATASIARAFISNKLYHSNIQRLWYLGPMFRYERPQSGRQRQFHQLGIECIGSINPMADTEVIHLANQLLKELQVKNYILEINSIGTLEERQSYKLDLVEYLSQYQQDLDQDSKNRMYSNPLRILDSKNLKTQEILDGAPKLKKYLNKRSTEHFYLVCTYLNNLNITYKINYKLVRGLDYYNQTAFEIKTNSKNSQNTICGGGRYDTLIEQLGGPKTPAVGWAIGIERLLKIIEDKLILPKQKINVYIATQGLAAQKKIWEIIQALEKKNIKFELDLSNTSFHKQIKKAGKLGAKFCIILGDQEIMDNCVTIKRLDEYVQYTAQYSNFLQEIHKLQH.

This sequence belongs to the class-II aminoacyl-tRNA synthetase family.

It localises to the plastid. The protein resides in the chloroplast. It catalyses the reaction tRNA(His) + L-histidine + ATP = L-histidyl-tRNA(His) + AMP + diphosphate + H(+). The protein is Histidine--tRNA ligase, chloroplastic of Gracilaria tenuistipitata var. liui (Red alga).